We begin with the raw amino-acid sequence, 295 residues long: Nitrogenase iron protein 1 (295 aa).

Residue 13-20 participates in ATP binding; the sequence is GKGGIGKS. Residue cysteine 101 coordinates [4Fe-4S] cluster. Residue arginine 104 is modified to ADP-ribosylarginine; by dinitrogenase reductase ADP-ribosyltransferase. Cysteine 135 contacts [4Fe-4S] cluster.

The protein belongs to the NifH/BchL/ChlL family. In terms of assembly, homodimer. It depends on [4Fe-4S] cluster as a cofactor. Post-translationally, the reversible ADP-ribosylation of Arg-104 inactivates the nitrogenase reductase and regulates nitrogenase activity.

The enzyme catalyses N2 + 8 reduced [2Fe-2S]-[ferredoxin] + 16 ATP + 16 H2O = H2 + 8 oxidized [2Fe-2S]-[ferredoxin] + 2 NH4(+) + 16 ADP + 16 phosphate + 6 H(+). In terms of biological role, the key enzymatic reactions in nitrogen fixation are catalyzed by the nitrogenase complex, which has 2 components: the iron protein and the molybdenum-iron protein. The protein is Nitrogenase iron protein 1 (nifH1) of Nostoc sp. (strain PCC 7120 / SAG 25.82 / UTEX 2576).